Here is a 348-residue protein sequence, read N- to C-terminus: Dihydroorotase (348 aa).

Residues His-14 and His-16 each contribute to the Zn(2+) site. Residues 16 to 18 and Asn-42 contribute to the substrate site; that span reads HLR. Zn(2+)-binding residues include Lys-100, His-137, and His-175. Residue Lys-100 is modified to N6-carboxylysine. His-137 serves as a coordination point for substrate. Leu-220 serves as a coordination point for substrate. Asp-248 is a binding site for Zn(2+). Asp-248 is an active-site residue. His-252 and Ala-264 together coordinate substrate.

Belongs to the metallo-dependent hydrolases superfamily. DHOase family. Class II DHOase subfamily. In terms of assembly, homodimer. Requires Zn(2+) as cofactor.

It carries out the reaction (S)-dihydroorotate + H2O = N-carbamoyl-L-aspartate + H(+). It participates in pyrimidine metabolism; UMP biosynthesis via de novo pathway; (S)-dihydroorotate from bicarbonate: step 3/3. Catalyzes the reversible cyclization of carbamoyl aspartate to dihydroorotate. This Pseudomonas putida (strain ATCC 47054 / DSM 6125 / CFBP 8728 / NCIMB 11950 / KT2440) protein is Dihydroorotase.